Reading from the N-terminus, the 169-residue chain is Putative cysteine protease YraA (169 aa).

One can recognise a PfpI endopeptidase domain in the interval 3–169 (KKIAVLVTDQ…FNRESLNLLK (167 aa)). The active-site Nucleophile is the Cys103. His104 is a catalytic residue.

Belongs to the peptidase C56 family.

Functionally, functions in the protection against aldehyde-stress, possibly by degrading damaged proteins. This chain is Putative cysteine protease YraA (yraA), found in Bacillus subtilis (strain 168).